The sequence spans 112 residues: Putative pterin-4-alpha-carbinolamine dehydratase (112 aa).

This sequence belongs to the pterin-4-alpha-carbinolamine dehydratase family.

It carries out the reaction (4aS,6R)-4a-hydroxy-L-erythro-5,6,7,8-tetrahydrobiopterin = (6R)-L-erythro-6,7-dihydrobiopterin + H2O. In Dechloromonas aromatica (strain RCB), this protein is Putative pterin-4-alpha-carbinolamine dehydratase.